The following is a 1047-amino-acid chain: MNNNDMDQKAKELQNVLEQFYLTTDNPKRKEIDTILNNYKAQSDSYEHVQYYLVHSDNQYVIWFSLSVIEDKVNKAWNSISASSQTQTKGLLLDIYLNKTGANSNSTVKNVLPQFIISKLGQVIADIGRYEFESNPQSYLLNITSIVRNPSTSIRGINLLQCISDSFTTNKKVISQQKKTTLKKLLHQNSPIIIQVLVDCLGQLFDQNAEKKFKHANLLAFHVGSPDTNTYTASFNAESKNLTKAVFDALLSYFTWVPLSDLLVPSLFDILFKYLRLDKNSIPALECLNEIVSKNLVPKGFESFLMRIFHQVYSLLTDIVSNGGQQINQYHPEFLNKFTQFIQIFINNHLGRIETNPNFPIPDFLGLLFQYSFFQTQPESFLQCIDIWSTFLDYLINLSQENGTPPPSKYTDGLLLFQSELVKRILYIFNNNTLSELDDEDKEINENGISETQLESYIKKSIEVVAKVTELYPEKSLENLYPLFTQNVTSFFCKAEESIKQGVSMENEQQFQYLVKDVTTILHLFGRLADQFVVSFAQTFTAANFIFQKLLDMCLFSVNQYIYKFGSDWEKLQIELLCTIRSFCFWLAEYGNQVRAIVGQQPDFDSNITKLISIIVPLFERNAPESILSSAGKLLMSLATISKPLNLFTQMDMLISNIHNICAPLSPSIQSILYPAISCTILLPPSNVNLSQQWDQRRPKYSPFIKGITASFLEIPQIPNFVEGKIFCKEELIQRVLRVLKVVTAIIRTVPEVTQAKSILHDGIQDTLKVTLGLFRVYISYPIVLEAILDFFFVLFEFLKAQVGVVFTQQTISTFLDILGGDNLNQLLSSGNDTGISIIKKLIEILTFIVQQPGNSFESLLGSTIEFSMEKLYPMIANTSSVLRSPFFTLLYSILDNHWKQCQQIQINSILTSFQSIFKQNDVNLFKQNLDHFEKLNSKLKLYEKISSMEPVFGCSFISMFFDVLISDTQSVHTDDIIVTIYRFASLNFDKFFNEFFTTFLVQKNQLSNEQKQILRSNFSNAIDQPTFSTNMTQFINDFSYFSFINS.

In terms of domain architecture, Importin N-terminal spans 32-98 (IDTILNNYKA…KGLLLDIYLN (67 aa)).

Belongs to the exportin family.

It localises to the nucleus. The protein localises to the cytoplasm. In terms of biological role, probably mediates the nuclear export of actin and profilin-actin complexes. The protein is Exportin-6 (xpo6) of Dictyostelium discoideum (Social amoeba).